The following is a 465-amino-acid chain: Glutathione reductase (465 aa).

Residues serine 16 and glycine 17 each coordinate FAD. Residue serine 16 coordinates glutathione. Glutathione is bound at residue arginine 23. FAD is bound by residues glutamate 42, threonine 49, cysteine 50, and lysine 58. The cysteines at positions 50 and 55 are disulfide-linked. Tyrosine 108 contacts glutathione. Glycine 124 is an FAD binding site. NADP(+)-binding residues include alanine 187, isoleucine 190, glutamate 193, arginine 210, arginine 216, and glycine 276. Aspartate 318 is a binding site for FAD. Leucine 324 serves as a coordination point for NADP(+). Threonine 326 contacts FAD. Arginine 334 lines the glutathione pocket. Position 357 (valine 357) interacts with NADP(+). Residue histidine 454 coordinates FAD. Histidine 454 acts as the Proton acceptor in catalysis.

It belongs to the class-I pyridine nucleotide-disulfide oxidoreductase family. The cofactor is FAD.

It is found in the cytoplasm. The catalysed reaction is 2 glutathione + NADP(+) = glutathione disulfide + NADPH + H(+). Catalyzes the reduction of glutathione disulfide (GSSG) to reduced glutathione (GSH). Constitutes the major mechanism to maintain a high GSH:GSSG ratio in the cytosol. The amount of GSH may affect the determination of cell fate. This chain is Glutathione reductase (gsr), found in Dictyostelium discoideum (Social amoeba).